A 538-amino-acid polypeptide reads, in one-letter code: MNPALLITASGLPALLDVAAPHLEWGPLAPVFVLMAGACVAVLVEAFVPRSGRRSTQIIVTVATLVVAIASTLTTIARGTRIVAGQGTLAPDGPTLATWVILLATGLGTVVLFAERVGTTQTAFVASASSVPGSPLEAKAEQEHREHTEVYPLLMFAALGMMCFAAANDLIMMFVALEIFSLPLYLLCGMSRRRRLLSQEAALKYFLLGALSSALFLYGIVLLYGCAGSFKLGDLAAAGVTQVGSSKLIVAGMILVAVGLLFKIGAVPFASWTPDVYTGAPTPVSGWMAVATKLVALVGLMRVLYVGLGAMRWDWQIVLAVVAVASMGVGAIVGLAQTDMKRLLAYSAIAHAGFVLVGVVGAWTTQTGMAEGQTGSVSSVLVYMTAYGLASIGFWLLILMVRRAGGESTEIASWAGIGRSHPWIGVLVVIFVLSFAGIPLTAGFTGKLVVFLAGWRGGYAWLVLIGVLFSLVAAAFYLRIIVVVFFRSAKEGDDPVEVAEPSIAGWITLIVCAVFTIVMGVAPQPIIDLFNQASTFLR.

The next 14 membrane-spanning stretches (helical) occupy residues 28-48 (LAPV…EAFV), 57-77 (QIIV…TTIA), 94-114 (PTLA…VLFA), 147-167 (HTEV…FAAA), 170-190 (LIMM…LCGM), 206-226 (FLLG…LYGC), 249-269 (IVAG…AVPF), 288-308 (MAVA…YVGL), 315-335 (WQIV…IVGL), 343-363 (LLAY…VGAW), 380-400 (VLVY…LILM), 424-444 (IGVL…TAGF), 458-478 (GYAW…AFYL), and 503-523 (IAGW…GVAP).

This sequence belongs to the complex I subunit 2 family. NDH-1 is composed of 14 different subunits. Subunits NuoA, H, J, K, L, M, N constitute the membrane sector of the complex.

The protein resides in the cell membrane. It carries out the reaction a quinone + NADH + 5 H(+)(in) = a quinol + NAD(+) + 4 H(+)(out). Functionally, NDH-1 shuttles electrons from NADH, via FMN and iron-sulfur (Fe-S) centers, to quinones in the respiratory chain. The immediate electron acceptor for the enzyme in this species is believed to be a menaquinone. Couples the redox reaction to proton translocation (for every two electrons transferred, four hydrogen ions are translocated across the cytoplasmic membrane), and thus conserves the redox energy in a proton gradient. This chain is NADH-quinone oxidoreductase subunit N, found in Cutibacterium acnes (strain DSM 16379 / KPA171202) (Propionibacterium acnes).